The sequence spans 81 residues: Putative membrane protein insertion efficiency factor (81 aa).

Positions 61–81 (NDGGFDPVPPAPSSRTSSIAE) are disordered.

This sequence belongs to the UPF0161 family.

The protein localises to the cell inner membrane. In terms of biological role, could be involved in insertion of integral membrane proteins into the membrane. The sequence is that of Putative membrane protein insertion efficiency factor from Pseudomonas putida (strain ATCC 700007 / DSM 6899 / JCM 31910 / BCRC 17059 / LMG 24140 / F1).